Here is a 119-residue protein sequence, read N- to C-terminus: NAD(P)H-quinone oxidoreductase subunit M (119 aa).

This sequence belongs to the complex I NdhM subunit family. NDH-1 can be composed of about 15 different subunits; different subcomplexes with different compositions have been identified which probably have different functions.

The protein resides in the cellular thylakoid membrane. The enzyme catalyses a plastoquinone + NADH + (n+1) H(+)(in) = a plastoquinol + NAD(+) + n H(+)(out). It carries out the reaction a plastoquinone + NADPH + (n+1) H(+)(in) = a plastoquinol + NADP(+) + n H(+)(out). Functionally, NDH-1 shuttles electrons from an unknown electron donor, via FMN and iron-sulfur (Fe-S) centers, to quinones in the respiratory and/or the photosynthetic chain. The immediate electron acceptor for the enzyme in this species is believed to be plastoquinone. Couples the redox reaction to proton translocation, and thus conserves the redox energy in a proton gradient. Cyanobacterial NDH-1 also plays a role in inorganic carbon-concentration. The polypeptide is NAD(P)H-quinone oxidoreductase subunit M (Crocosphaera subtropica (strain ATCC 51142 / BH68) (Cyanothece sp. (strain ATCC 51142))).